Here is a 125-residue protein sequence, read N- to C-terminus: Protein ApaG (125 aa).

The 125-residue stretch at 1-125 (MINSPRVCVQ…FRLAVPTLIH (125 aa)) folds into the ApaG domain.

This chain is Protein ApaG, found in Klebsiella pneumoniae (strain 342).